The primary structure comprises 106 residues: Nucleoid-associated protein Nwi_0368 (106 aa).

The protein belongs to the YbaB/EbfC family. Homodimer.

The protein localises to the cytoplasm. It localises to the nucleoid. Its function is as follows. Binds to DNA and alters its conformation. May be involved in regulation of gene expression, nucleoid organization and DNA protection. The protein is Nucleoid-associated protein Nwi_0368 of Nitrobacter winogradskyi (strain ATCC 25391 / DSM 10237 / CIP 104748 / NCIMB 11846 / Nb-255).